The following is a 199-amino-acid chain: Recombination protein RecR (199 aa).

Residues 57 to 72 (CERCNNLSEAPLCAVC) form a C4-type zinc finger. The Toprim domain maps to 80–174 (SILCVVESPA…TISRIARGVP (95 aa)).

This sequence belongs to the RecR family.

Functionally, may play a role in DNA repair. It seems to be involved in an RecBC-independent recombinational process of DNA repair. It may act with RecF and RecO. The chain is Recombination protein RecR from Acidithiobacillus ferrooxidans (strain ATCC 23270 / DSM 14882 / CIP 104768 / NCIMB 8455) (Ferrobacillus ferrooxidans (strain ATCC 23270)).